Consider the following 553-residue polypeptide: MAASTSGYSGVLFRLRKYANKSQSLCHIGNSNFIIRTTWTTGCKHQHQLNTQIESLPQMVGVVGLEIHAQIHSKSKLFSGSHVSFSDPPNSLVSHFDASLPGTLPVLNRRCVEAAVLTGLALNCTINKKSLFDRKHYFYADMPAGYQITQQRLPIAVNGTLSYSHFEGRKRNHVVTKSVKIKQIQLEQDSGKSLHDDERSQTLIDLNRAGVGLMELVMEPEMCCGEEAGAAVRELQLILQALGTCQANMAEGQLRVDANVSVHHPGEPLGVRTEVKNINSVRHLAKAIDYEIQRQMEVLQSGGTVLNETRAFDSKSGITIPMRDKEGLQDYRFMPEPNLPPLFVYESEASVPAGADSTQLVLIDRLSSQLPELPSVTRTRLVETYGILREHSFTLVNEDGLVDYFESVVKMTKTEPRKVIGWVMNELMGNLNLQNLKVSQSPVSPCALAEMINLVRSGHISSSTAKKVFQEMWKTPEKTVEQIVKEQDLWMINDKEELRQICQRIVDSHSEEVQIIRGGNKKVLNKLMGEIQKETKGKTNPLQVKAILEEMIF.

The transit peptide at 1-18 directs the protein to the mitochondrion; sequence MAASTSGYSGVLFRLRKY.

It belongs to the GatB/GatE family. GatB subfamily. Subunit of the heterotrimeric GatCAB amidotransferase (AdT) complex, composed of A (qrsl1), B (gatb) and C (gatc) subunits.

The protein localises to the mitochondrion. It carries out the reaction L-glutamyl-tRNA(Gln) + L-glutamine + ATP + H2O = L-glutaminyl-tRNA(Gln) + L-glutamate + ADP + phosphate + H(+). Allows the formation of correctly charged Gln-tRNA(Gln) through the transamidation of misacylated Glu-tRNA(Gln) in the mitochondria. The reaction takes place in the presence of glutamine and ATP through an activated gamma-phospho-Glu-tRNA(Gln). This chain is Glutamyl-tRNA(Gln) amidotransferase subunit B, mitochondrial, found in Danio rerio (Zebrafish).